A 286-amino-acid polypeptide reads, in one-letter code: tRNA pseudouridine synthase A (286 aa).

The active-site Nucleophile is the D60. Y132 lines the substrate pocket.

The protein belongs to the tRNA pseudouridine synthase TruA family. Homodimer.

The enzyme catalyses uridine(38/39/40) in tRNA = pseudouridine(38/39/40) in tRNA. Formation of pseudouridine at positions 38, 39 and 40 in the anticodon stem and loop of transfer RNAs. This is tRNA pseudouridine synthase A from Mycobacterium leprae (strain TN).